The primary structure comprises 360 residues: Photosystem II protein D1 2 (360 aa).

Transmembrane regions (helical) follow at residues 29–46 (YIGW…AATT), 118–133 (HFLT…EWEL), and 142–156 (WICL…AATA). Residue H118 coordinates chlorophyll a. Position 126 (Y126) interacts with pheophytin a. Residues D170 and E189 each contribute to the [CaMn4O5] cluster site. The chain crosses the membrane as a helical span at residues 197 to 218 (FHMLGVAGVFGGSLFSAMHGSL). A chlorophyll a-binding site is contributed by H198. A quinone contacts are provided by residues H215 and 264 to 265 (SF). H215 lines the Fe cation pocket. H272 is a binding site for Fe cation. A helical transmembrane segment spans residues 274–288 (FLAAWPVIGIWFTAL). [CaMn4O5] cluster is bound by residues H332, E333, D342, and A344. A propeptide spanning residues 345–360 (AGEVAPVAISAPAING) is cleaved from the precursor.

It belongs to the reaction center PufL/M/PsbA/D family. As to quaternary structure, PSII is composed of 1 copy each of membrane proteins PsbA, PsbB, PsbC, PsbD, PsbE, PsbF, PsbH, PsbI, PsbJ, PsbK, PsbL, PsbM, PsbT, PsbX, PsbY, PsbZ, Psb30/Ycf12, peripheral proteins PsbO, CyanoQ (PsbQ), PsbU, PsbV and a large number of cofactors. It forms dimeric complexes. Requires The D1/D2 heterodimer binds P680, chlorophylls that are the primary electron donor of PSII, and subsequent electron acceptors. It shares a non-heme iron and each subunit binds pheophytin, quinone, additional chlorophylls, carotenoids and lipids. D1 provides most of the ligands for the Mn4-Ca-O5 cluster of the oxygen-evolving complex (OEC). There is also a Cl(-1) ion associated with D1 and D2, which is required for oxygen evolution. The PSII complex binds additional chlorophylls, carotenoids and specific lipids. as cofactor. In terms of processing, tyr-161 forms a radical intermediate that is referred to as redox-active TyrZ, YZ or Y-Z. Post-translationally, C-terminally processed by CtpA; processing is essential to allow assembly of the oxygen-evolving complex and thus photosynthetic growth.

It is found in the cellular thylakoid membrane. It catalyses the reaction 2 a plastoquinone + 4 hnu + 2 H2O = 2 a plastoquinol + O2. Its function is as follows. Photosystem II (PSII) is a light-driven water:plastoquinone oxidoreductase that uses light energy to abstract electrons from H(2)O, generating O(2) and a proton gradient subsequently used for ATP formation. It consists of a core antenna complex that captures photons, and an electron transfer chain that converts photonic excitation into a charge separation. The D1/D2 (PsbA/PsbD) reaction center heterodimer binds P680, the primary electron donor of PSII as well as several subsequent electron acceptors. In Nostoc sp. (strain PCC 7120 / SAG 25.82 / UTEX 2576), this protein is Photosystem II protein D1 2.